A 545-amino-acid chain; its full sequence is Membrane protein insertase YidC (545 aa).

The helical transmembrane segment at 8 to 28 (ILLATVLSVGILILWQVIFPK) threads the bilayer. The interval 31-69 (PPKPAPTPAAEVAKPAAPAAPAPGAAAPAVPAPPPDAPE) is disordered. Positions 38–59 (PAAEVAKPAAPAAPAPGAAAPA) are enriched in low complexity. Transmembrane regions (helical) follow at residues 325–345 (IDYG…LYVM), 355–375 (WGVA…PLTY), 421–441 (LGGC…YAAL), 458–478 (LTAH…SFVM), and 497–517 (FFPG…TLYI).

The protein belongs to the OXA1/ALB3/YidC family. Type 1 subfamily. As to quaternary structure, interacts with the Sec translocase complex via SecD. Specifically interacts with transmembrane segments of nascent integral membrane proteins during membrane integration.

The protein resides in the cell inner membrane. Functionally, required for the insertion and/or proper folding and/or complex formation of integral membrane proteins into the membrane. Involved in integration of membrane proteins that insert both dependently and independently of the Sec translocase complex, as well as at least some lipoproteins. Aids folding of multispanning membrane proteins. The protein is Membrane protein insertase YidC of Anaeromyxobacter dehalogenans (strain 2CP-C).